A 346-amino-acid polypeptide reads, in one-letter code: NADH-ubiquinone oxidoreductase chain 2 (346 aa).

The next 10 membrane-spanning stretches (helical) occupy residues 25–45, 52–72, 95–115, 124–144, 149–169, 178–198, 200–220, 242–262, 274–294, and 326–346; these read HWILAWTGLEINTLAIIPLIS, AIEATIKYFLTQSTASALILF, CLMLTMAIAIKLGLVPFHFWF, LITALLLSTLMKLPPITLLLL, LNTTLLTLLAISSTLIGGWMG, ILAFSSISHLGWMIMIISYNP, LTILTFILYTIMTSTVFLSLA, ATVMLTLLSLAGLPPLTGFMP, EMTPMATIITMLSLLSLFFYL, and AILTALSTTLLPLSPLIITML.

Belongs to the complex I subunit 2 family. Core subunit of respiratory chain NADH dehydrogenase (Complex I) which is composed of 45 different subunits.

Its subcellular location is the mitochondrion inner membrane. It catalyses the reaction a ubiquinone + NADH + 5 H(+)(in) = a ubiquinol + NAD(+) + 4 H(+)(out). Core subunit of the mitochondrial membrane respiratory chain NADH dehydrogenase (Complex I) which catalyzes electron transfer from NADH through the respiratory chain, using ubiquinone as an electron acceptor. Essential for the catalytic activity and assembly of complex I. In Gallus gallus (Chicken), this protein is NADH-ubiquinone oxidoreductase chain 2 (MT-ND2).